The primary structure comprises 304 residues: Deoxyribonuclease-1-like 1 (304 aa).

A signal peptide spans 1 to 24; it reads MPYMAMHGLTVALLLIFLAGGTEA. Asn-92 carries an N-linked (GlcNAc...) asparagine glycan. Residue Glu-103 is part of the active site. A glycan (N-linked (GlcNAc...) asparagine) is linked at Asn-123. His-154 is an active-site residue. Cysteines 193 and 230 form a disulfide. N-linked (GlcNAc...) asparagine glycosylation is present at Asn-229.

The protein belongs to the DNase I family.

Its subcellular location is the endoplasmic reticulum. The polypeptide is Deoxyribonuclease-1-like 1 (DNASE1L1) (Cricetulus griseus (Chinese hamster)).